Here is a 55-residue protein sequence, read N- to C-terminus: Large ribosomal subunit protein bL33 (55 aa).

This sequence belongs to the bacterial ribosomal protein bL33 family.

This is Large ribosomal subunit protein bL33 from Micrococcus luteus (strain ATCC 4698 / DSM 20030 / JCM 1464 / CCM 169 / CCUG 5858 / IAM 1056 / NBRC 3333 / NCIMB 9278 / NCTC 2665 / VKM Ac-2230) (Micrococcus lysodeikticus).